A 748-amino-acid polypeptide reads, in one-letter code: Disintegrin and metalloproteinase domain-containing protein 10 (748 aa).

The N-terminal stretch at 1–19 is a signal peptide; that stretch reads MVLLRVLILLLSWVAGLGG. A propeptide spanning residues 20–213 is cleaved from the precursor; it reads QYGNPLNKYI…NGPELLRKKR (194 aa). Residues 20–672 lie on the Extracellular side of the membrane; that stretch reads QYGNPLNKYI…SPELYENIAE (653 aa). Residues 171-178 carry the Cysteine switch motif; sequence GGCADHSV. C173 contributes to the Zn(2+) binding site. A Peptidase M12B domain is found at 220–456; the sequence is NTCQLYIQTD…KRNNCFVESG (237 aa). N-linked (GlcNAc...) asparagine glycosylation is found at N267 and N278. 16 disulfides stabilise this stretch: C344/C451, C399/C435, C460/C495, C471/C484, C473/C479, C483/C515, C503/C511, C510/C536, C524/C543, C530/C562, C555/C567, C572/C598, C580/C607, C582/C597, C594/C639, and C632/C645. H383 is a binding site for Zn(2+). E384 is an active-site residue. Zn(2+) is bound by residues H387 and H393. N439 carries an N-linked (GlcNAc...) asparagine glycan. The Disintegrin domain maps to 457-551; sequence QPICGNGMVE…LCPASDPKPN (95 aa). N551 carries N-linked (GlcNAc...) asparagine glycosylation. The chain crosses the membrane as a helical span at residues 673-696; sequence WIVAYWWAVLLMGIALIMLMAGFI. Residues 697 to 748 lie on the Cytoplasmic side of the membrane; that stretch reads KICSVHTPSSNPKLPPPKPLPGTLKRRRPPQPIQQPQRQRPRESYQMGHMRR. Residues 704 to 748 are disordered; sequence PSSNPKLPPPKPLPGTLKRRRPPQPIQQPQRQRPRESYQMGHMRR. Residues 708 to 715 carry the SH3-binding motif; that stretch reads PKLPPPKP. Residue T719 is modified to Phosphothreonine. Residues 722–728 carry the SH3-binding motif; sequence RRRPPQP. An interaction with AP2A1, AP2A2 and AP2M1 region spans residues 734 to 748; that stretch reads RQRPRESYQMGHMRR.

Forms a ternary EFNA5-EPHA3-ADAM10 complex mediating EFNA5 extracellular domain shedding by ADAM10 which regulates the EFNA5-EPHA3 complex internalization and function, the cleavage occurs in trans, with ADAM10 and its substrate being on the membranes of opposing cells. Interacts with the clathrin adapter AP2 complex subunits AP2A1, AP2A2, AP2B1, and AP2M1; this interaction facilitates ADAM10 endocytosis from the plasma membrane during long-term potentiation in hippocampal neurons. Forms a ternary complex composed of ADAM10, EPHA4 and CADH1; within the complex, ADAM10 cleaves CADH1 which disrupts adherens junctions. Interacts with EPHA2. Interacts with NGF in a divalent cation-dependent manner. Interacts with TSPAN14; the interaction promotes ADAM10 maturation and cell surface expression. Interacts with TSPAN5, TSPAN10, TSPAN14, TSPAN15, TSPAN17 and TSPAN33; these interactions regulate ADAM10 substrate specificity, endocytosis and turnover. Interacts (via extracellular domain) with TSPAN33 (via extracellular domain) and (via cytoplasmic domain) with AFDN; interaction with TSPAN33 allows the docking of ADAM10 to zonula adherens through a PDZ11-dependent interaction between TSPAN33 and PLEKHA7 while interaction with AFDN locks ADAM10 at zonula adherens. Interacts with DLG1; this interaction recruits ADAM10 to the cell membrane during long-term depression in hippocampal neurons. Interacts (via extracellular domain) with BACE1 (via extracellular domain). Interacts with FAM171A1. Zn(2+) is required as a cofactor. In terms of processing, the precursor is cleaved by furin and PCSK7. As to expression, expressed at low level in kidney, spleen, lung, adrenal, heart and peripheral nerve.

Its subcellular location is the golgi apparatus membrane. It is found in the cell membrane. It localises to the cytoplasmic vesicle. The protein resides in the clathrin-coated vesicle. The protein localises to the cell projection. Its subcellular location is the axon. It is found in the dendrite. It localises to the cell junction. The protein resides in the adherens junction. The protein localises to the cytoplasm. It catalyses the reaction Endopeptidase of broad specificity.. With respect to regulation, catalytically inactive when the propeptide is intact and associated with the mature enzyme. The disintegrin and cysteine-rich regions modulate access of substrates to exerts an inhibitory effect on the cleavage of ADAM10 substrates. Its function is as follows. Transmembrane metalloprotease which mediates the ectodomain shedding of a myriad of transmembrane proteins, including adhesion proteins, growth factor precursors and cytokines being essential for development and tissue homeostasis. Associates with six members of the tetraspanin superfamily TspanC8 which regulate its exit from the endoplasmic reticulum and its substrate selectivity. Cleaves the membrane-bound precursor of TNF-alpha at '76-Ala-|-Val-77' to its mature soluble form. Responsible for the proteolytical release of soluble JAM3 from endothelial cells surface. Responsible for the proteolytic release of several other cell-surface proteins, including heparin-binding epidermal growth-like factor, ephrin-A2, CD44, CDH2 and for constitutive and regulated alpha-secretase cleavage of amyloid precursor protein (APP). Contributes to the normal cleavage of the cellular prion protein. Involved in the cleavage of the adhesion molecule L1 at the cell surface and in released membrane vesicles, suggesting a vesicle-based protease activity. Also controls the proteolytic processing of Notch and mediates lateral inhibition during neurogenesis. Required for the development of type 1 transitional B cells into marginal zone B cells, probably by cleaving Notch. Responsible for the FasL ectodomain shedding and for the generation of the remnant ADAM10-processed FasL (FasL APL) transmembrane form. Also cleaves the ectodomain of the integral membrane proteins CORIN and ITM2B. Mediates the proteolytic cleavage of LAG3, leading to release the secreted form of LAG3. Mediates the proteolytic cleavage of IL6R and IL11RA, leading to the release of secreted forms of IL6R and IL11RA. Enhances the cleavage of CHL1 by BACE1. Cleaves NRCAM. Cleaves TREM2, resulting in shedding of the TREM2 ectodomain. Involved in the development and maturation of glomerular and coronary vasculature. During development of the cochlear organ of Corti, promotes pillar cell separation by forming a ternary complex with CADH1 and EPHA4 and cleaving CADH1 at adherens junctions. May regulate the EFNA5-EPHA3 signaling. Regulates leukocyte transmigration as a sheddase for the adherens junction protein VE-cadherin/CDH5 in endothelial cells. This chain is Disintegrin and metalloproteinase domain-containing protein 10 (ADAM10), found in Bos taurus (Bovine).